An 86-amino-acid chain; its full sequence is Small ribosomal subunit protein bS20 (86 aa).

Residues 1 to 23 (MANIKSSKKDSIKSRKKKKLNAS) form a disordered region.

It belongs to the bacterial ribosomal protein bS20 family.

Its function is as follows. Binds directly to 16S ribosomal RNA. The sequence is that of Small ribosomal subunit protein bS20 from Buchnera aphidicola subsp. Baizongia pistaciae (strain Bp).